A 613-amino-acid chain; its full sequence is Dihydroxy-acid dehydratase (613 aa).

Residue aspartate 81 participates in Mg(2+) binding. Cysteine 122 provides a ligand contact to [2Fe-2S] cluster. 2 residues coordinate Mg(2+): aspartate 123 and lysine 124. Residue lysine 124 is modified to N6-carboxylysine. Cysteine 193 is a binding site for [2Fe-2S] cluster. Glutamate 489 serves as a coordination point for Mg(2+). The active-site Proton acceptor is serine 515.

It belongs to the IlvD/Edd family. In terms of assembly, homodimer. It depends on [2Fe-2S] cluster as a cofactor. Mg(2+) is required as a cofactor.

The enzyme catalyses (2R)-2,3-dihydroxy-3-methylbutanoate = 3-methyl-2-oxobutanoate + H2O. It catalyses the reaction (2R,3R)-2,3-dihydroxy-3-methylpentanoate = (S)-3-methyl-2-oxopentanoate + H2O. Its pathway is amino-acid biosynthesis; L-isoleucine biosynthesis; L-isoleucine from 2-oxobutanoate: step 3/4. It functions in the pathway amino-acid biosynthesis; L-valine biosynthesis; L-valine from pyruvate: step 3/4. Functionally, functions in the biosynthesis of branched-chain amino acids. Catalyzes the dehydration of (2R,3R)-2,3-dihydroxy-3-methylpentanoate (2,3-dihydroxy-3-methylvalerate) into 2-oxo-3-methylpentanoate (2-oxo-3-methylvalerate) and of (2R)-2,3-dihydroxy-3-methylbutanoate (2,3-dihydroxyisovalerate) into 2-oxo-3-methylbutanoate (2-oxoisovalerate), the penultimate precursor to L-isoleucine and L-valine, respectively. The chain is Dihydroxy-acid dehydratase from Pseudomonas putida (strain GB-1).